The sequence spans 106 residues: Cell division protein FtsB (106 aa).

Topologically, residues 1 to 3 are cytoplasmic; it reads MGK. Residues 4–21 traverse the membrane as a helical segment; sequence LTLLLLVLLGWLQYSLWL. Over 22–106 the chain is Periplasmic; it reads GKNGIHDYVR…SRPSTPNNTQ (85 aa). Residues 29–70 are a coiled coil; it reads YVRVKNDVAMQERNNSKLKARNDQLSAEIDDLTGGQEAIEER.

The protein belongs to the FtsB family. In terms of assembly, part of a complex composed of FtsB, FtsL and FtsQ.

Its subcellular location is the cell inner membrane. In terms of biological role, essential cell division protein. May link together the upstream cell division proteins, which are predominantly cytoplasmic, with the downstream cell division proteins, which are predominantly periplasmic. The sequence is that of Cell division protein FtsB from Photorhabdus laumondii subsp. laumondii (strain DSM 15139 / CIP 105565 / TT01) (Photorhabdus luminescens subsp. laumondii).